Reading from the N-terminus, the 75-residue chain is Protein myomixer (75 aa).

Topologically, residues 1–5 (MPAVF) are cytoplasmic. The chain crosses the membrane as a helical span at residues 6–28 (LLLRSLVVRLFGSRLAASGVQLL). Topologically, residues 29–75 (RRILTTATGHLGTVLRNIWERISSQQSKEAILGCVLCLLNMHKKVDN) are extracellular. An AxLyCxL motif is present at residues 58-67 (AILGCVLCLL).

The protein belongs to the MYMX family. As to expression, specifically expressed in the developing myotome.

The protein resides in the cell membrane. In terms of biological role, myoblast-specific protein that mediates myoblast fusion, an essential step for the formation of multi-nucleated muscle fibers. Involved in membrane fusion downstream of the lipid mixing step mediated by mymk. Acts by generating membrane stresses via its extracellular C-terminus, leading to drive fusion pore formation. The chain is Protein myomixer from Danio rerio (Zebrafish).